The chain runs to 169 residues: Probable calcium-binding protein CML13 (169 aa).

The segment at 1-26 (MSTVKGQTRRERPRGARPHGLTKQKR) is disordered. Residues 15 to 24 (GARPHGLTKQ) show a composition bias toward basic residues. EF-hand domains are found at residues 24–59 (QKRQEIKEAFDLFDTDNSGTIDAKELNVAMRALGFE), 60–95 (MTEEQINQMIADVDKDGSGSIDYEEFEHMMTAKIGE), 97–132 (DSKEELTKAFSIIDQDKNGKISDVDIQRIAKELGEN), and 133–168 (FTYQEIQEMVQEADRNGDGEIDFDEFIRMMRRTGYG). 20 residues coordinate Ca(2+): Asp37, Asp39, Ser41, Thr43, Glu48, Asp73, Asp75, Ser77, Ser79, Glu84, Asp110, Asp112, Asn114, Lys116, Asp121, Asp146, Asn148, Asp150, Glu152, and Glu157.

Potential calcium sensor. This Oryza sativa subsp. japonica (Rice) protein is Probable calcium-binding protein CML13 (CML13).